A 574-amino-acid chain; its full sequence is Sulfate adenylyltransferase (574 aa).

Positions methionine 1–tyrosine 169 are N-terminal. Positions aspartate 170–threonine 394 are catalytic. Glutamine 197 provides a ligand contact to sulfate. ATP is bound by residues glutamine 197–asparagine 200 and glycine 291–histidine 294. Catalysis depends on residues threonine 198, arginine 199, and asparagine 200. Residue arginine 199 coordinates sulfate. Alanine 295 contributes to the sulfate binding site. ATP is bound at residue valine 333. The interval glutamine 395 to serine 574 is allosteric regulation domain; adenylyl-sulfate kinase-like. Residues aspartate 434–arginine 437, arginine 451, isoleucine 477–alanine 478, and arginine 516 contribute to the 3'-phosphoadenylyl sulfate site.

It in the N-terminal section; belongs to the sulfate adenylyltransferase family. The protein in the C-terminal section; belongs to the APS kinase family. Homohexamer. Dimer of trimers.

The protein resides in the cytoplasm. It carries out the reaction sulfate + ATP + H(+) = adenosine 5'-phosphosulfate + diphosphate. It participates in sulfur metabolism; hydrogen sulfide biosynthesis; sulfite from sulfate: step 1/3. Its activity is regulated as follows. Allosterically inhibited by 3'-phosphoadenosine 5'-phosphosulfate (PAPS). Its function is as follows. Catalyzes the first intracellular reaction of sulfate assimilation, forming adenosine-5'-phosphosulfate (APS) from inorganic sulfate and ATP. Plays an important role in sulfate activation as a component of the biosynthesis pathway of sulfur-containing amino acids. The chain is Sulfate adenylyltransferase from Neosartorya fischeri (strain ATCC 1020 / DSM 3700 / CBS 544.65 / FGSC A1164 / JCM 1740 / NRRL 181 / WB 181) (Aspergillus fischerianus).